A 320-amino-acid polypeptide reads, in one-letter code: Foldase protein PrsA (320 aa).

The first 20 residues, 1-20 (MKMINKLIVPVTASALLLGA), serve as a signal peptide directing secretion. Residue Cys-21 is the site of N-palmitoyl cysteine attachment. A lipid anchor (S-diacylglycerol cysteine) is attached at Cys-21. The PpiC domain occupies 139-245 (EDSKKASHIL…FGYHIIKADK (107 aa)). The interval 159 to 198 (EGLDDKEAKQKAEEIQKEVSKDPSKFGEIAKKESMDTGSA) is disordered.

This sequence belongs to the PrsA family.

The protein resides in the cell membrane. It carries out the reaction [protein]-peptidylproline (omega=180) = [protein]-peptidylproline (omega=0). Its function is as follows. Plays a major role in protein secretion by helping the post-translocational extracellular folding of several secreted proteins. The chain is Foldase protein PrsA from Staphylococcus aureus (strain bovine RF122 / ET3-1).